We begin with the raw amino-acid sequence, 968 residues long: Alanine--tRNA ligase, cytoplasmic (968 aa).

N-acetylmethionine is present on methionine 1. 2 positions are modified to phosphoserine: serine 3 and serine 8. At lysine 19 the chain carries N6-acetyllysine. ATP is bound by residues arginine 77, histidine 95, tryptophan 176, and 214 to 216 (IWN). L-alanine contacts are provided by asparagine 216 and aspartate 239. Residue glycine 243 coordinates ATP. Phosphoserine occurs at positions 399 and 555. Zn(2+) contacts are provided by histidine 605, histidine 609, cysteine 723, and histidine 727. A Nuclear localization signal motif is present at residues 750-763 (RRIVAVTGAEAQKA). The residue at position 876 (lysine 876) is an N6-acetyllysine. Lysine 943 is subject to N6,N6,N6-trimethyllysine; alternate. Position 943 is an N6,N6-dimethyllysine; alternate (lysine 943). Lysine 943 is modified (N6-methyllysine; alternate).

The protein belongs to the class-II aminoacyl-tRNA synthetase family. As to quaternary structure, monomer. Interacts with ANKRD16; the interaction is direct. The cofactor is Zn(2+). In terms of processing, ISGylated. Post-translationally, methylation at 'Lys-943' by METTL21C.

It localises to the cytoplasm. The protein localises to the nucleus. It carries out the reaction tRNA(Ala) + L-alanine + ATP = L-alanyl-tRNA(Ala) + AMP + diphosphate. It catalyses the reaction (S)-lactate + ATP + H(+) = (S)-lactoyl-AMP + diphosphate. The catalysed reaction is (S)-lactoyl-AMP + L-lysyl-[protein] = N(6)-[(S)-lactoyl]-L-lysyl-[protein] + AMP + 2 H(+). The protein lactyltransferase activity is inhibited by beta-alanine. Its function is as follows. Catalyzes the attachment of alanine to tRNA(Ala) in a two-step reaction: alanine is first activated by ATP to form Ala-AMP and then transferred to the acceptor end of tRNA(Ala). Also edits incorrectly charged tRNA(Ala) via its editing domain. In presence of high levels of lactate, also acts as a protein lactyltransferase that mediates lactylation of lysine residues in target proteins, such as TEAD1, TP53/p53 and YAP1. Protein lactylation takes place in a two-step reaction: lactate is first activated by ATP to form lactate-AMP and then transferred to lysine residues of target proteins. Acts as an inhibitor of TP53/p53 activity by catalyzing lactylation of TP53/p53. Acts as a positive regulator of the Hippo pathway by mediating lactylation of TEAD1 and YAP1. This Homo sapiens (Human) protein is Alanine--tRNA ligase, cytoplasmic.